Here is a 153-residue protein sequence, read N- to C-terminus: 6,7-dimethyl-8-ribityllumazine synthase (153 aa).

5-amino-6-(D-ribitylamino)uracil-binding positions include phenylalanine 21, 55-57 (AFE), and 79-81 (TVI). 84-85 (AT) lines the (2S)-2-hydroxy-3-oxobutyl phosphate pocket. The Proton donor role is filled by histidine 87. A 5-amino-6-(D-ribitylamino)uracil-binding site is contributed by phenylalanine 112. Arginine 126 contacts (2S)-2-hydroxy-3-oxobutyl phosphate.

The protein belongs to the DMRL synthase family. Forms an icosahedral capsid composed of 60 subunits, arranged as a dodecamer of pentamers.

The enzyme catalyses (2S)-2-hydroxy-3-oxobutyl phosphate + 5-amino-6-(D-ribitylamino)uracil = 6,7-dimethyl-8-(1-D-ribityl)lumazine + phosphate + 2 H2O + H(+). It functions in the pathway cofactor biosynthesis; riboflavin biosynthesis; riboflavin from 2-hydroxy-3-oxobutyl phosphate and 5-amino-6-(D-ribitylamino)uracil: step 1/2. Catalyzes the formation of 6,7-dimethyl-8-ribityllumazine by condensation of 5-amino-6-(D-ribitylamino)uracil with 3,4-dihydroxy-2-butanone 4-phosphate. This is the penultimate step in the biosynthesis of riboflavin. This chain is 6,7-dimethyl-8-ribityllumazine synthase, found in Bacillus cereus (strain G9842).